A 250-amino-acid polypeptide reads, in one-letter code: Dimethyl sulfide dehydrogenase assembly chaperone protein (250 aa).

Residues 231–250 (SAEARSDSAPDAAAHQNLWG) form a disordered region.

This sequence belongs to the type II DMSO reductase enzyme chaperone family.

Its subcellular location is the cytoplasm. In terms of biological role, may function as a system-specific chaperone protein essential for the assembly of an active dimethyl sulfide dehydrogenase DdhABC. The chain is Dimethyl sulfide dehydrogenase assembly chaperone protein (ddhD) from Rhodovulum sulfidophilum (Rhodobacter sulfidophilus).